We begin with the raw amino-acid sequence, 653 residues long: Macrolide export ATP-binding/permease protein MacB (653 aa).

Residues 6-244 (LALSHICREF…AAASLPADKP (239 aa)) enclose the ABC transporter domain. 42–49 (GSSGSGKS) serves as a coordination point for ATP. 4 helical membrane passes run 277–297 (FLTMLGIIIGIAAVSSVVALG), 526–546 (LAFLVAAIAVISLVVGGIGVM), 587–607 (LGGIAGILIAVALGALLNLLL), and 617–637 (FSIGAAFLTSTAIGIFFGYFP).

Belongs to the ABC transporter superfamily. Macrolide exporter (TC 3.A.1.122) family. As to quaternary structure, homodimer.

The protein localises to the cell inner membrane. Functionally, non-canonical ABC transporter that contains transmembrane domains (TMD), which form a pore in the inner membrane, and an ATP-binding domain (NBD), which is responsible for energy generation. Confers resistance against macrolides. This Bradyrhizobium diazoefficiens (strain JCM 10833 / BCRC 13528 / IAM 13628 / NBRC 14792 / USDA 110) protein is Macrolide export ATP-binding/permease protein MacB.